A 182-amino-acid chain; its full sequence is Probable inosine/xanthosine triphosphatase (182 aa).

Glu-65 serves as a coordination point for Mg(2+). Substrate is bound at residue 65–66 (EA).

This sequence belongs to the YjjX NTPase family. In terms of assembly, homodimer. The cofactor is Mg(2+). Mn(2+) serves as cofactor.

It carries out the reaction XTP + H2O = XDP + phosphate + H(+). The enzyme catalyses ITP + H2O = IDP + phosphate + H(+). Phosphatase that hydrolyzes non-canonical purine nucleotides such as XTP and ITP to their respective diphosphate derivatives. Probably excludes non-canonical purines from DNA/RNA precursor pool, thus preventing their incorporation into DNA/RNA and avoiding chromosomal lesions. The sequence is that of Probable inosine/xanthosine triphosphatase from Pyrobaculum neutrophilum (strain DSM 2338 / JCM 9278 / NBRC 100436 / V24Sta) (Thermoproteus neutrophilus).